Consider the following 479-residue polypeptide: Tegument protein VP16 homolog (479 aa).

It belongs to the herpesviridae tegument protein VP16 protein family. Associates with the VP16-induced complex; binding to host HCFC1 activates VP16 for association with the octamer motif-binding host protein POU2F1, to form a multiprotein-DNA complex responsible for activating transcription of the viral immediate early genes.

The protein localises to the virion tegument. It localises to the host nucleus. Its function is as follows. Transcriptional activator of immediate-early (IE) gene products (alpha genes). Acts as a key activator of lytic infection by initiating the lytic program through the assembly of the transcriptional regulatory VP16-induced complex composed of VP16 and two cellular factors, HCFC1 and POU2F1. VP16-induced complex represents a regulatory switch: when it is on, it promotes IE-gene expression and thus lytic infection, and when it is off, it limits IE-gene transcription favoring latent infection. May play a role in the aggregation of tegument proteins around nucleocapsids during virus morphogenesis. This chain is Tegument protein VP16 homolog, found in Equus caballus (Horse).